Here is a 251-residue protein sequence, read N- to C-terminus: Triosephosphate isomerase (251 aa).

9-11 lines the substrate pocket; it reads NWK. His-95 acts as the Electrophile in catalysis. Residue Glu-167 is the Proton acceptor of the active site. Residues Gly-173, Ser-212, and 233–234 each bind substrate; that span reads GG.

It belongs to the triosephosphate isomerase family. As to quaternary structure, homodimer.

Its subcellular location is the cytoplasm. The enzyme catalyses D-glyceraldehyde 3-phosphate = dihydroxyacetone phosphate. It participates in carbohydrate biosynthesis; gluconeogenesis. The protein operates within carbohydrate degradation; glycolysis; D-glyceraldehyde 3-phosphate from glycerone phosphate: step 1/1. Its function is as follows. Involved in the gluconeogenesis. Catalyzes stereospecifically the conversion of dihydroxyacetone phosphate (DHAP) to D-glyceraldehyde-3-phosphate (G3P). This chain is Triosephosphate isomerase, found in Pseudomonas paraeruginosa (strain DSM 24068 / PA7) (Pseudomonas aeruginosa (strain PA7)).